A 266-amino-acid polypeptide reads, in one-letter code: Syntaxin-71 (266 aa).

At 1–243 (MTVIDILTRV…TVNQLRSSRN (243 aa)) the chain is on the cytoplasmic side. Serine 12 carries the post-translational modification Phosphoserine. The stretch at 44 to 87 (ETQIETALEKAELVTKEKNRAAAVAMNAEIRRTKARLSEEVPKL) forms a coiled coil. Positions 122–146 (DGTAGGPKSTSAWTPSSTTSRPDIK) are disordered. Residues 130 to 141 (STSAWTPSSTTS) are compositionally biased toward low complexity. The t-SNARE coiled-coil homology domain occupies 172 to 234 (EMRKIKQEQG…KNTNVRLKDT (63 aa)). The helical; Anchor for type IV membrane protein transmembrane segment at 244 to 264 (FCIDIVLLCIVLGIAAYLYNV) threads the bilayer. The Vesicular portion of the chain corresponds to 265 to 266 (LK).

The protein belongs to the syntaxin family. In terms of assembly, part of the t-SNARE complex. In terms of tissue distribution, expressed in root, leaf, stem, flower and silique.

It localises to the membrane. In terms of biological role, vesicle trafficking protein that functions in the secretory pathway. The sequence is that of Syntaxin-71 (SYP71) from Arabidopsis thaliana (Mouse-ear cress).